Consider the following 436-residue polypeptide: Enolase (436 aa).

(2R)-2-phosphoglycerate is bound at residue glutamine 167. The active-site Proton donor is glutamate 209. Mg(2+) is bound by residues aspartate 246, glutamate 291, and aspartate 318. (2R)-2-phosphoglycerate is bound by residues lysine 343, arginine 372, serine 373, and lysine 394. Residue lysine 343 is the Proton acceptor of the active site.

It belongs to the enolase family. In terms of assembly, component of the RNA degradosome, a multiprotein complex involved in RNA processing and mRNA degradation. Requires Mg(2+) as cofactor.

It localises to the cytoplasm. It is found in the secreted. The protein resides in the cell surface. It catalyses the reaction (2R)-2-phosphoglycerate = phosphoenolpyruvate + H2O. Its pathway is carbohydrate degradation; glycolysis; pyruvate from D-glyceraldehyde 3-phosphate: step 4/5. Its function is as follows. Catalyzes the reversible conversion of 2-phosphoglycerate (2-PG) into phosphoenolpyruvate (PEP). It is essential for the degradation of carbohydrates via glycolysis. This is Enolase from Glaesserella parasuis serovar 5 (strain SH0165) (Haemophilus parasuis).